Consider the following 163-residue polypeptide: Adenosine 5'-monophosphoramidase HINT2 (163 aa).

A mitochondrion-targeting transit peptide spans 1–17 (MAAAVLLAVGLRAARRT). Position 45 is an N6-succinyllysine (lysine 45). Residues 55–163 (IFSRILDRSL…GGRQLQWPPG (109 aa)) form the HIT domain. 2 residues coordinate AMP: serine 63 and aspartate 80. Lysine 119 carries the post-translational modification N6-acetyllysine. At lysine 128 the chain carries N6-acetyllysine; alternate. Lysine 128 is modified (N6-succinyllysine; alternate). Asparagine 136 is a binding site for AMP. The residue at position 139 (lysine 139) is an N6-acetyllysine. AMP contacts are provided by residues 142-145 (AQSV) and 149-151 (HIH). The Histidine triad motif signature appears at 147–151 (HLHIH). The Tele-AMP-histidine intermediate role is filled by histidine 149.

It belongs to the HINT family.

The protein localises to the mitochondrion. The catalysed reaction is adenosine 5'-phosphoramidate + H2O = AMP + NH4(+). Its function is as follows. Exhibits adenosine 5'-monophosphoramidase activity, hydrolyzing purine nucleotide phosphoramidates with a single phosphate group such as adenosine 5'monophosphoramidate (AMP-NH2) to yield AMP and NH2. Hydrolyzes adenosine 5'-O-p-nitrophenylphosphoramidate (AMP-pNA). May be involved in steroid biosynthesis. May play a role in apoptosis. The protein is Adenosine 5'-monophosphoramidase HINT2 of Mus musculus (Mouse).